Reading from the N-terminus, the 89-residue chain is Small ribosomal subunit protein uS15 (89 aa).

Residues Met1 to Asp21 are compositionally biased toward basic and acidic residues. The tract at residues Met1–Ser24 is disordered.

The protein belongs to the universal ribosomal protein uS15 family. In terms of assembly, part of the 30S ribosomal subunit. Forms a bridge to the 50S subunit in the 70S ribosome, contacting the 23S rRNA.

Functionally, one of the primary rRNA binding proteins, it binds directly to 16S rRNA where it helps nucleate assembly of the platform of the 30S subunit by binding and bridging several RNA helices of the 16S rRNA. Its function is as follows. Forms an intersubunit bridge (bridge B4) with the 23S rRNA of the 50S subunit in the ribosome. The polypeptide is Small ribosomal subunit protein uS15 (Bacillus subtilis (strain 168)).